The sequence spans 233 residues: Aspartate/glutamate leucyltransferase (233 aa).

It belongs to the R-transferase family. Bpt subfamily.

It is found in the cytoplasm. It catalyses the reaction N-terminal L-glutamyl-[protein] + L-leucyl-tRNA(Leu) = N-terminal L-leucyl-L-glutamyl-[protein] + tRNA(Leu) + H(+). The catalysed reaction is N-terminal L-aspartyl-[protein] + L-leucyl-tRNA(Leu) = N-terminal L-leucyl-L-aspartyl-[protein] + tRNA(Leu) + H(+). Functionally, functions in the N-end rule pathway of protein degradation where it conjugates Leu from its aminoacyl-tRNA to the N-termini of proteins containing an N-terminal aspartate or glutamate. The chain is Aspartate/glutamate leucyltransferase from Vibrio cholerae serotype O1 (strain ATCC 39315 / El Tor Inaba N16961).